A 489-amino-acid chain; its full sequence is Probable transporter MCH1 (489 aa).

3 consecutive transmembrane segments (helical) span residues 30–50 (IAYIFALFAAITSGFVSLISL), 68–88 (MIVTVINMGMYLTPPILGIIA), and 92–112 (GPITLSLSSVLGFIPSYAYLA). N-linked (GlcNAc...) asparagine glycosylation occurs at asparagine 123. A run of 8 helical transmembrane segments spans residues 132 to 152 (TLVCFFIIGVATSGLYFSALI), 163 to 183 (LLSISIPTTCYGLSSLIGSQF), 202 to 222 (VFKAFAWIYTVIGVMIWIATS), 279 to 299 (VLYIFGATIFCALGPLEMFIA), 307 to 327 (VLAGGHEPAMSSALLSIYALT), 351 to 371 (WILLLFLVVGLVTQGKIYMLS), 388 to 408 (FYIGIMQGIAYGGLFTIYPTI), and 421 to 441 (AYGTLMIAPALGSALSCLIYA). Asparagine 450 carries N-linked (GlcNAc...) asparagine glycosylation. A helical transmembrane segment spans residues 462-482 (ETTALEFCAAILLTVVVTVLW).

This sequence belongs to the major facilitator superfamily.

It is found in the vacuole membrane. In terms of biological role, probable transporter. The polypeptide is Probable transporter MCH1 (MCH1) (Candida glabrata (strain ATCC 2001 / BCRC 20586 / JCM 3761 / NBRC 0622 / NRRL Y-65 / CBS 138) (Yeast)).